Consider the following 359-residue polypeptide: Peptide chain release factor 1 (359 aa).

Position 235 is an N5-methylglutamine (Q235). A disordered region spans residues 283 to 309; sequence QKAESERSQARRSQVGSGDRSERIRTY.

It belongs to the prokaryotic/mitochondrial release factor family. Methylated by PrmC. Methylation increases the termination efficiency of RF1.

It is found in the cytoplasm. Functionally, peptide chain release factor 1 directs the termination of translation in response to the peptide chain termination codons UAG and UAA. This chain is Peptide chain release factor 1, found in Brucella melitensis biotype 2 (strain ATCC 23457).